The primary structure comprises 423 residues: Serine--tRNA ligase (423 aa).

L-serine is bound at residue 229 to 231 (TAE). Residue 258-260 (RRE) participates in ATP binding. E281 is an L-serine binding site. Position 345 to 348 (345 to 348 (EISS)) interacts with ATP. S379 provides a ligand contact to L-serine.

This sequence belongs to the class-II aminoacyl-tRNA synthetase family. Type-1 seryl-tRNA synthetase subfamily. As to quaternary structure, homodimer. The tRNA molecule binds across the dimer.

The protein localises to the cytoplasm. The enzyme catalyses tRNA(Ser) + L-serine + ATP = L-seryl-tRNA(Ser) + AMP + diphosphate + H(+). It catalyses the reaction tRNA(Sec) + L-serine + ATP = L-seryl-tRNA(Sec) + AMP + diphosphate + H(+). The protein operates within aminoacyl-tRNA biosynthesis; selenocysteinyl-tRNA(Sec) biosynthesis; L-seryl-tRNA(Sec) from L-serine and tRNA(Sec): step 1/1. In terms of biological role, catalyzes the attachment of serine to tRNA(Ser). Is also able to aminoacylate tRNA(Sec) with serine, to form the misacylated tRNA L-seryl-tRNA(Sec), which will be further converted into selenocysteinyl-tRNA(Sec). This chain is Serine--tRNA ligase (serS1), found in Methanosarcina barkeri (strain Fusaro / DSM 804).